The primary structure comprises 737 residues: MVSSEPKGPANVANTASPLKAHESSGKRANGQKFKPGGAGGARKFDKFGGGAGKSFVKPGAGGAKKFDKSGPGGFKKFDKSGATGDKRLGGNKFRGKPQTQPQAPAEGEKQDWNKFKKEKKDLKLKRKSAKDTYEISKEANQIHEKLRCRRTENKDKLVEQIYKVLNVGDTISKVVKAHDTARVIQSMLKYASPALRAEISEKLLPFTVEMCQSKYAQFCVQRMLKYGAPATKAKLVDSLYGHIVRLAGHSIGSGLLDSMYQSATPNQRIYMRQEFYGDLYRKAKDSNVKTLSDTYKEATNMKASILGSVKANLDHVANKQLVDSALVHAVMLEYLRACDEDEEKLEETVTAFAALVPHMLSTKEGSEAAVICFYKSTPKNRRAIIKNIKEHLLKIANHEHGHVFLISLLNALDDTKATKKAIYDHLHGDLKALMSSPYGRRVIQWLVAPGDTTCFHPEFIRTVEEGLAFGKKEKELRRKEILEQIEAPIAQSIAEDAAFWLSNSHIGLVTGDILNHIQGESYEKAASALAQVVVQPEWRISADAAGPQPQDKKKPHNDVEAIIAQATKQRRKLLYVESSSDDEDEDEDEDEESDDEGDEKEQKEAAADDAEPKVKKAKKEPKKPKAKEEEPAAPLVSGIEEAGMHIVLKKILKNDGKREGTPFSQQLLQNLSSDVLKAWLGVNRACFVLLKLVEECPALLDDCKKAIAAERSLSQILADRKTPGAKLLAAKLDIGK.

Residues 1–128 (MVSSEPKGPA…EKKDLKLKRK (128 aa)) are disordered. Composition is skewed to basic and acidic residues over residues 76–89 (KKFD…DKRL) and 107–122 (EGEK…EKKD). The PUM-HD domain maps to 139–490 (EANQIHEKLR…EILEQIEAPI (352 aa)). 5 Pumilio repeats span residues 167–202 (NVGD…EISE), 203–238 (KLLP…KLVD), 239–274 (SLYG…YMRQ), 388–425 (NIKE…AIYD), and 426–462 (HLHG…EFIR). The interval 577–638 (VESSSDDEDE…EEEPAAPLVS (62 aa)) is disordered. The span at 580–600 (SSDDEDEDEDEDEESDDEGDE) shows a compositional bias: acidic residues. Residues 601–615 (KEQKEAAADDAEPKV) are compositionally biased toward basic and acidic residues. Over residues 616–626 (KKAKKEPKKPK) the composition is skewed to basic residues.

This chain is Protein penguin, found in Drosophila melanogaster (Fruit fly).